The sequence spans 271 residues: Putative pyruvate, phosphate dikinase regulatory protein 1 (271 aa).

Gly156–Thr163 provides a ligand contact to ADP.

This sequence belongs to the pyruvate, phosphate/water dikinase regulatory protein family. PDRP subfamily.

It carries out the reaction N(tele)-phospho-L-histidyl/L-threonyl-[pyruvate, phosphate dikinase] + ADP = N(tele)-phospho-L-histidyl/O-phospho-L-threonyl-[pyruvate, phosphate dikinase] + AMP + H(+). It catalyses the reaction N(tele)-phospho-L-histidyl/O-phospho-L-threonyl-[pyruvate, phosphate dikinase] + phosphate + H(+) = N(tele)-phospho-L-histidyl/L-threonyl-[pyruvate, phosphate dikinase] + diphosphate. Its function is as follows. Bifunctional serine/threonine kinase and phosphorylase involved in the regulation of the pyruvate, phosphate dikinase (PPDK) by catalyzing its phosphorylation/dephosphorylation. The chain is Putative pyruvate, phosphate dikinase regulatory protein 1 from Staphylococcus saprophyticus subsp. saprophyticus (strain ATCC 15305 / DSM 20229 / NCIMB 8711 / NCTC 7292 / S-41).